A 337-amino-acid polypeptide reads, in one-letter code: Eukaryotic translation initiation factor 3 subunit H (337 aa).

Residues 21 to 153 (VQCDGLAVMK…LKAYRLTPQA (133 aa)) form the MPN domain.

Belongs to the eIF-3 subunit H family. As to quaternary structure, component of the eukaryotic translation initiation factor 3 (eIF-3) complex.

The protein localises to the cytoplasm. Its function is as follows. Component of the eukaryotic translation initiation factor 3 (eIF-3) complex, which is involved in protein synthesis of a specialized repertoire of mRNAs and, together with other initiation factors, stimulates binding of mRNA and methionyl-tRNAi to the 40S ribosome. The eIF-3 complex specifically targets and initiates translation of a subset of mRNAs involved in cell proliferation. This is Eukaryotic translation initiation factor 3 subunit H from Bombyx mori (Silk moth).